Consider the following 477-residue polypeptide: Spliceosome-associated protein CWC27 homolog (477 aa).

In terms of domain architecture, PPIase cyclophilin-type spans S11 to V166. Disordered stretches follow at residues L203 to T355 and T401 to R477. Residues E208–N218 show a composition bias toward acidic residues. Basic and acidic residues-rich tracts occupy residues S230–R240 and V247–S258. Residues D259–S279 are compositionally biased toward acidic residues. Composition is skewed to basic and acidic residues over residues D280–K299, E311–E353, and Q430–N442. Residues D308–K381 adopt a coiled-coil conformation.

Belongs to the cyclophilin-type PPIase family. Part of the activated spliceosome B/catalytic step 1 spliceosome, one of the forms of the spliceosome which has a well-formed active site but still cannot catalyze the branching reaction and is composed at least of 52 proteins, the U2, U5 and U6 snRNAs and the pre-mRNA. Recruited during early steps of activated spliceosome B maturation, it is probably one of the first proteins released from this complex as he matures to the spliceosome C complex. Component of the minor spliceosome, which splices U12-type introns.

It is found in the nucleus. Functionally, as part of the spliceosome, plays a role in pre-mRNA splicing. Probable inactive PPIase with no peptidyl-prolyl cis-trans isomerase activity. The protein is Spliceosome-associated protein CWC27 homolog (cwc27) of Xenopus laevis (African clawed frog).